The chain runs to 134 residues: ATP synthase epsilon chain, plastid (134 aa).

The protein belongs to the ATPase epsilon chain family. F-type ATPases have 2 components, CF(1) - the catalytic core - and CF(0) - the membrane proton channel. CF(1) has five subunits: alpha(3), beta(3), gamma(1), delta(1), epsilon(1). CF(0) has three main subunits: a, b and c.

The protein resides in the plastid membrane. Its function is as follows. Produces ATP from ADP in the presence of a proton gradient across the membrane. The chain is ATP synthase epsilon chain, plastid from Prototheca wickerhamii.